The chain runs to 1388 residues: Collagen alpha-1(XV) chain (1388 aa).

Residues 1-27 (MAPRRNNGQCWCLLMLLSVSTPLPAVT) form the signal peptide. The region spanning 66 to 249 (AYSFGPGANV…SSASGETSGL (184 aa)) is the Laminin G-like domain. Residues 223–250 (TVHPDPRTPEELCDPEESSASGETSGLQ) form a disordered region. The nonhelical region 1 (NC1) stretch occupies residues 229 to 555 (RTPEELCDPE…WITPAQREHV (327 aa)). Polar residues predominate over residues 240 to 249 (SSASGETSGL). Residues serine 243 and serine 247 are each glycosylated (O-linked (Xyl...) (chondroitin sulfate) serine). Residue threonine 265 is glycosylated (O-linked (GalNAc...) threonine). Residues 266–301 (QASPKEAKVEPINTPPTPSSPFEDMELSGEPVPEGT) form a disordered region. Asparagine 306 and asparagine 324 each carry an N-linked (GlcNAc...) asparagine glycan. O-linked (Xyl...) (chondroitin sulfate) serine glycosylation is present at serine 343. A run of 4 repeats spans residues 358 to 408 (AATA…EERL), 409 to 459 (AATA…EDSL), 460 to 509 (TTAA…EEDL), and 510 to 555 (AAAT…REHV). The 4 X tandem repeats stretch occupies residues 358 to 555 (AATAAGLAEV…WITPAQREHV (198 aa)). The segment at 371 to 795 (TAGEAEASSV…VGPPGPRGPP (425 aa)) is disordered. Polar residues predominate over residues 379-392 (SVPTGGPTLSMSTE). The segment covering 409–420 (AATAAGEAEALA) has biased composition (low complexity). Positions 452–472 (GPSSEDSLTTAAAATEVSLST) are enriched in polar residues. Over residues 510–527 (AAATTEEPLITAGGEESG) the composition is skewed to low complexity. Residues 528 to 540 (SPPPDGPPLPLPT) show a composition bias toward pro residues. A triple-helical region 1 (COL1) region spans residues 556–573 (GMKGQAGPKGEKGDAGEE). The tract at residues 574-618 (LPGPPEPSGPVGPTAGAEAEGSGLGWGSDVGSGSGDLVGSEQLLR) is nonhelical region 2 (NC2). Positions 595–609 (SGLGWGSDVGSGSGD) are enriched in gly residues. Collagen-like domains follow at residues 619 to 680 (GPPG…MKGE) and 681 to 731 (KGAR…PPGP). Residues 619–732 (GPPGPPGPPG…PGPPGPPGPG (114 aa)) form a triple-helical region 2 (COL2) region. Over residues 620–630 (PPGPPGPPGLP) the composition is skewed to pro residues. N-linked (GlcNAc...) asparagine glycosylation is present at asparagine 687. The span at 716 to 731 (VMGPPGPPGPPGPPGP) shows a compositional bias: pro residues. The segment at 733–763 (CTMGLGFEDTEGSGSTQLLNEPKLSRPTAAI) is nonhelical region 3 (NC3). O-linked (Xyl...) (chondroitin sulfate) serine glycosylation is present at serine 745. Positions 764 to 798 (GLKGEKGDRGPKGERGMDGASIVGPPGPRGPPGHI) are triple-helical region 3 (COL3). Residues 766–780 (KGEKGDRGPKGERGM) are compositionally biased toward basic and acidic residues. The segment at 799 to 822 (KVLSNSLINITHGFMNFSDIPELV) is nonhelical region 4 (NC4). Asparagine 807 and asparagine 814 each carry an N-linked (GlcNAc...) asparagine glycan. One can recognise a Collagen-like 3 domain in the interval 823 to 865 (GPPGPDGLPGLPGFPGPRGPKGDTGLPGFPGLKGEQGEKGEPG). The triple-helical region 4 (COL4) stretch occupies residues 823–867 (GPPGPDGLPGLPGFPGPRGPKGDTGLPGFPGLKGEQGEKGEPGAI). Over residues 827–840 (PDGLPGLPGFPGPR) the composition is skewed to pro residues. The segment at 827–864 (PDGLPGLPGFPGPRGPKGDTGLPGFPGLKGEQGEKGEP) is disordered. The segment at 868–878 (LTEDIPLERLM) is nonhelical region 5 (NC5). A Collagen-like 4 domain is found at 879–927 (GKKGEPGMHGAPGPMGPKGPPGHKGEFGLPGRPGRPGLNGLKGTKGDPG). Positions 879-949 (GKKGEPGMHG…PGPPGPPGAV (71 aa)) are triple-helical region 5 (COL5). Residues 950–983 (INIKGAIFPIPVRPHCKMPVDTAHPGSPELITFH) form a nonhelical region 6 (NC6) region. The tract at residues 984-1013 (GVKGEKGSWGLPGSKGEKGDQGAQGPPGPP) is triple-helical region 6 (COL6). Disordered stretches follow at residues 988–1016 (EKGS…PLDL) and 1029–1133 (ENGD…GSRN). A nonhelical region 7 (NC7) region spans residues 1014–1027 (LDLAYLRHFLNNLK). Residues 1028–1045 (GENGDKGFKGEKGEKGDI) are triple-helical region 7 (COL7). Positions 1029–1044 (ENGDKGFKGEKGEKGD) are enriched in basic and acidic residues. An N-linked (GlcNAc...) asparagine glycan is attached at asparagine 1046. A nonhelical region 8 (NC8) region spans residues 1046–1052 (NGSFLMS). The triple-helical region 8 (COL8) stretch occupies residues 1053–1107 (GPPGLPGNPGPAGQKGETVVGPQGPPGAPGLPGPPGFGRPGDPGPPGPPGPPGPP). Composition is skewed to pro residues over residues 1075–1107 (QGPP…PGPP) and 1117–1126 (PGPPGPPGQP). Residues 1108 to 1117 (AILGAAVALP) form a nonhelical region 9 (NC9) region. The segment at 1118-1132 (GPPGPPGQPGLPGSR) is triple-helical region 9 (COL9). Residues 1133-1388 (NLVTAFSNMD…ENSFMTDARK (256 aa)) form a nonhelical region 10 (NC10) region. 2 cysteine pairs are disulfide-bonded: cysteine 1237–cysteine 1377 and cysteine 1339–cysteine 1369.

It belongs to the multiplexin collagen family. In terms of assembly, trimer; disulfide-linked. As to quaternary structure, interacts moderately with EFEMP2. In terms of processing, prolines at the third position of the tripeptide repeating unit (G-X-Y) are hydroxylated in some or all of the chains. O-glycosylated; with core 1 or possibly core 8 glycans. Contains chondroitin sulfate. Detected in fibroblasts and urine (at protein level). Detected in placenta (at protein level). Expressed predominantly in internal organs such as adrenal gland, pancreas and kidney.

It localises to the secreted. It is found in the extracellular space. The protein localises to the extracellular matrix. Its function is as follows. Structural protein that stabilizes microvessels and muscle cells, both in heart and in skeletal muscle. In terms of biological role, restin potently inhibits angiogenesis. This Homo sapiens (Human) protein is Collagen alpha-1(XV) chain (COL15A1).